We begin with the raw amino-acid sequence, 340 residues long: CRISPR-associated protein Cas7 (340 aa).

As to quaternary structure, component of the Cascade-like complex (Cascade I-B), composed of Cas5, Cas6, Cas7 and crRNA.

It is found in the cytoplasm. Its function is as follows. CRISPR (clustered regularly interspaced short palindromic repeat) is an adaptive immune system that provides protection against mobile genetic elements (viruses, transposable elements and conjugative plasmids). CRISPR clusters contain sequences complementary to antecedent mobile elements and target invading nucleic acids. CRISPR clusters are transcribed and processed into CRISPR RNA (crRNA). Plasmid targeted by CRISPR locus P1 transform wild-type cells very poorly. This protein helps process or stabilize pre-crRNA into individual crRNA units, in vivo Cas6 and Cas7 are also required for optimal crRNA processing and/or stability. The chain is CRISPR-associated protein Cas7 from Haloferax volcanii (strain ATCC 29605 / DSM 3757 / JCM 8879 / NBRC 14742 / NCIMB 2012 / VKM B-1768 / DS2) (Halobacterium volcanii).